The following is a 101-amino-acid chain: NAD(P)H-quinone oxidoreductase subunit 4L, chloroplastic (101 aa).

3 helical membrane passes run 2 to 22, 32 to 52, and 61 to 81; these read IFQSYLLIAASMFCIGLYGLL, MSLELLLNAVNLNLLTFSNFV, and VLALFVIALAAAEAAIGLAII.

The protein belongs to the complex I subunit 4L family. In terms of assembly, NDH is composed of at least 16 different subunits, 5 of which are encoded in the nucleus.

It localises to the plastid. It is found in the chloroplast thylakoid membrane. The enzyme catalyses a plastoquinone + NADH + (n+1) H(+)(in) = a plastoquinol + NAD(+) + n H(+)(out). The catalysed reaction is a plastoquinone + NADPH + (n+1) H(+)(in) = a plastoquinol + NADP(+) + n H(+)(out). NDH shuttles electrons from NAD(P)H:plastoquinone, via FMN and iron-sulfur (Fe-S) centers, to quinones in the photosynthetic chain and possibly in a chloroplast respiratory chain. The immediate electron acceptor for the enzyme in this species is believed to be plastoquinone. Couples the redox reaction to proton translocation, and thus conserves the redox energy in a proton gradient. This is NAD(P)H-quinone oxidoreductase subunit 4L, chloroplastic from Nephroselmis olivacea (Green alga).